The chain runs to 272 residues: MSDFEQLFAGKLPKLIMFDLDGTLVDSVPDLAVAVDTMLAELGRPTAGLESVRAWVGNGAPVLVRRALANNLDHSGVDEALAERGLDIFMRAYAEKHEFTVVYPGVRETLKWLQKMGVEMALITNKPERFVAPLLDEMKLGRFFRWIIGGDTMPQKKPDPAALFFVMKMAGVPASQSLFVGDSRSDVQAAKAAGVACVALSYGYNHGRPIAEENPAMVIDDLRRLIPGCLDLDAEILLPDIKRPSSRESIVVVTRKLWMKVIKALARWRWRA.

Catalysis depends on Asp19, which acts as the Nucleophile. Mg(2+) is bound by residues Asp19, Asp21, and Asp182.

It belongs to the HAD-like hydrolase superfamily. CbbY/CbbZ/Gph/YieH family. The cofactor is Mg(2+).

The catalysed reaction is 2-phosphoglycolate + H2O = glycolate + phosphate. It functions in the pathway organic acid metabolism; glycolate biosynthesis; glycolate from 2-phosphoglycolate: step 1/1. Its function is as follows. Specifically catalyzes the dephosphorylation of 2-phosphoglycolate. Is involved in the dissimilation of the intracellular 2-phosphoglycolate formed during the DNA repair of 3'-phosphoglycolate ends, a major class of DNA lesions induced by oxidative stress. The sequence is that of Phosphoglycolate phosphatase from Pseudomonas syringae pv. tomato (strain ATCC BAA-871 / DC3000).